The following is a 128-amino-acid chain: MFAVIKTGGRQYRVVPDDVLEIGKIAGDVGTIVQLGEVLVLGGDTPVLGLPTVAGASVAAEVLQHKRGPKVIAFKKRRRKHSKRKRGYRDEITVLRITEILADGKTPTVGPRPKKEKVVEPAEGEGDH.

The tract at residues 104-128 (GKTPTVGPRPKKEKVVEPAEGEGDH) is disordered. Positions 116–128 (EKVVEPAEGEGDH) are enriched in basic and acidic residues.

It belongs to the bacterial ribosomal protein bL21 family. Part of the 50S ribosomal subunit. Contacts protein L20.

In terms of biological role, this protein binds to 23S rRNA in the presence of protein L20. In Nitrobacter hamburgensis (strain DSM 10229 / NCIMB 13809 / X14), this protein is Large ribosomal subunit protein bL21.